Here is a 116-residue protein sequence, read N- to C-terminus: C-C motif chemokine 6 (116 aa).

A signal peptide spans 1 to 21 (MRNSKTAISFFILVAVLGSQA). Intrachain disulfides connect Cys-50–Cys-73, Cys-51–Cys-89, and Cys-60–Cys-100.

Belongs to the intercrine beta (chemokine CC) family. Post-translationally, the N-terminal is proteolytically cleaved by proteases associated with inflammatory responses. The processed forms CL6(22-95) and CCL6(23-95) show increase in CCR1-mediated signaling and chemotaxis assays in vitro. As to expression, expressed in myelopoietic bone marrow cultures stimulated by GM-CSF.

Its subcellular location is the secreted. Chemotactic factor that attracts mostly macrophage, but it can also attract B cells, CD4(+) lymphocytes and eosinophils. In Mus musculus (Mouse), this protein is C-C motif chemokine 6 (Ccl6).